The following is a 90-amino-acid chain: WAP four-disulfide core domain protein 12 (90 aa).

The N-terminal stretch at 1–23 is a signal peptide; sequence MGSSSFLVLMVSLALVTLVAVEG. In terms of domain architecture, WAP spans 27-74; it reads GIEKAGVCPADNVRCFKSDPPQCHTDQDCLGERKCCYLHCGFKCVIPV. Intrachain disulfides connect Cys34–Cys62, Cys41–Cys66, Cys49–Cys61, and Cys55–Cys70.

Its subcellular location is the secreted. In terms of biological role, antibacterial protein. Putative acid-stable proteinase inhibitor. The sequence is that of WAP four-disulfide core domain protein 12 (WFDC12) from Gorilla gorilla gorilla (Western lowland gorilla).